A 267-amino-acid chain; its full sequence is MKVTIAHNNYDKTLKTVAYLKEILKKKNVVFDAKYPDVVISVGGDGTLINAFHRYENQVDSVRFIGVHTGHLGFYTDWRNYDIDKMVDALLLTDEAPAKYPLLEIKLITESGETKYHLAVNESAVKRVSHTLEADVYINDELFENFRGDGLCVSTPTGSTAYSKSLGGAVIHPRLKALQMTEIASINNRVFRTLSAPIVIAPDQWITIVPNADHFVMTVDGARIDVRNAKKIEYRISHHSIQFDQFGHHHFWSRVQDAFIGENNSND.

Residue aspartate 45 is the Proton acceptor of the active site. NAD(+) is bound by residues 45–46, 121–122, arginine 147, aspartate 149, 160–165, and alanine 184; these read DG, NE, and TAYSKS.

This sequence belongs to the NAD kinase family. Requires a divalent metal cation as cofactor.

The protein resides in the cytoplasm. The catalysed reaction is NAD(+) + ATP = ADP + NADP(+) + H(+). Functionally, involved in the regulation of the intracellular balance of NAD and NADP, and is a key enzyme in the biosynthesis of NADP. Catalyzes specifically the phosphorylation on 2'-hydroxyl of the adenosine moiety of NAD to yield NADP. This chain is NAD kinase, found in Lactobacillus acidophilus (strain ATCC 700396 / NCK56 / N2 / NCFM).